The primary structure comprises 426 residues: Putative phosphate permease TC_0064 (426 aa).

11 consecutive transmembrane segments (helical) span residues 1–21 (MWWL…NIGA), 37–57 (LTLR…AVVL), 83–103 (VFGM…ASFF), 104–124 (GWPV…GIIL), 140–160 (VSWL…FSFI), 183–203 (AIII…ARVV), 207–227 (VAFR…IWGV), 260–280 (LVVE…MSFA), 309–329 (VLFI…ATWG), 365–385 (FGFP…VGLA), and 399–419 (IVLS…MFFL).

This sequence belongs to the inorganic phosphate transporter (PiT) (TC 2.A.20) family.

The protein localises to the cell membrane. Functionally, potential transporter for phosphate. This chain is Putative phosphate permease TC_0064, found in Chlamydia muridarum (strain MoPn / Nigg).